Here is a 264-residue protein sequence, read N- to C-terminus: Carbonic anhydrase 7 (264 aa).

Residues 5–262 (HGWGYGQDDG…LKGRVVKASF (258 aa)) enclose the Alpha-carbonic anhydrase domain. Catalysis depends on His-66, which acts as the Proton donor/acceptor. Residues His-96, His-98, and His-121 each contribute to the Zn(2+) site. 201-202 (TT) contacts substrate.

The protein belongs to the alpha-carbonic anhydrase family. It depends on Zn(2+) as a cofactor.

Its subcellular location is the cytoplasm. The enzyme catalyses hydrogencarbonate + H(+) = CO2 + H2O. Its activity is regulated as follows. Activated by histamine, L-adrenaline, L- and D-histidine, and L- and D-phenylalanine. Inhibited by coumarins, sulfonamide derivatives such as acetazolamide (AZA), by saccharin and Foscarnet (phosphonoformate trisodium salt). In terms of biological role, reversible hydration of carbon dioxide. In Homo sapiens (Human), this protein is Carbonic anhydrase 7 (CA7).